The primary structure comprises 299 residues: Ankyrin repeat domain-containing protein 54 (299 aa).

The segment at 1 to 32 (MAAAAGGADDESRSGRSSSDGECAVAPEPLTG) is disordered. The residue at position 2 (Ala2) is an N-acetylalanine. Phosphoserine is present on residues Ser57 and Ser62. A Nuclear localization signal (NLS) motif is present at residues 98 to 116 (RRLGPTGKEVHALKRLRDS). ANK repeat units follow at residues 108-137 (HALKRLRDSANANDVETVQQLLEEGTDPCA), 141-170 (KGRTALHFASCNGNDQIVQLLLDHGADPNQ), 174-203 (LGNTPLHLAACTNHAPVITTLLRGGARVDA), and 207-239 (AGRTPLHLAKSKLNILQEGHSQCLEAVRLEVKQ). The segment at 140 to 240 (DKGRTALHFA…EAVRLEVKQI (101 aa)) is LYN-binding. Positions 282–292 (LLASFTSLSLQ) match the Nuclear export signal (NES) motif.

In terms of assembly, interacts (via ankyrin repeat region) with LYN (via SH3-domain) in an activation-independent status of LYN. Forms a multiprotein complex with LYN and HCLS1. Interacts with TSN2, VAV1, DBNL and LASP1.

Its subcellular location is the nucleus. It localises to the cytoplasm. The protein localises to the midbody. Plays an important role in regulating intracellular signaling events associated with erythroid terminal differentiation. This chain is Ankyrin repeat domain-containing protein 54 (ANKRD54), found in Bos taurus (Bovine).